A 251-amino-acid chain; its full sequence is Imidazole glycerol phosphate synthase subunit HisF (251 aa).

Catalysis depends on residues aspartate 11 and aspartate 130.

Belongs to the HisA/HisF family. In terms of assembly, heterodimer of HisH and HisF.

It localises to the cytoplasm. It carries out the reaction 5-[(5-phospho-1-deoxy-D-ribulos-1-ylimino)methylamino]-1-(5-phospho-beta-D-ribosyl)imidazole-4-carboxamide + L-glutamine = D-erythro-1-(imidazol-4-yl)glycerol 3-phosphate + 5-amino-1-(5-phospho-beta-D-ribosyl)imidazole-4-carboxamide + L-glutamate + H(+). The protein operates within amino-acid biosynthesis; L-histidine biosynthesis; L-histidine from 5-phospho-alpha-D-ribose 1-diphosphate: step 5/9. In terms of biological role, IGPS catalyzes the conversion of PRFAR and glutamine to IGP, AICAR and glutamate. The HisF subunit catalyzes the cyclization activity that produces IGP and AICAR from PRFAR using the ammonia provided by the HisH subunit. This is Imidazole glycerol phosphate synthase subunit HisF from Chlorobium phaeobacteroides (strain DSM 266 / SMG 266 / 2430).